Here is a 946-residue protein sequence, read N- to C-terminus: DNA primase (946 aa).

The tract at residues 596–626 is disordered; it reads RDTEEDEDGKEDKNNVPGNGVFQKTTSSVDT. The segment covering 617 to 626 has biased composition (polar residues); sequence FQKTTSSVDT. Residues 881–920 form a CHC2-type zinc finger; that stretch reads CLNYTHRNPQETVQVFIDLRTEHSYALWASLWSRCFTKKC.

The protein belongs to the herpesviridae DNA primase family. Associates with the helicase and the primase-associated factor to form the helicase-primase factor.

The protein resides in the host nucleus. In terms of biological role, essential component of the helicase/primase complex. Unwinds the DNA at the replication forks and generates single-stranded DNA for both leading and lagging strand synthesis. The primase initiates primer synthesis and thereby produces large amount of short RNA primers on the lagging strand that the polymerase elongates using dNTPs. This is DNA primase (UL70) from Human cytomegalovirus (strain Merlin) (HHV-5).